Reading from the N-terminus, the 559-residue chain is Sporulation protein kinase mde3 (559 aa).

The Protein kinase domain maps to 21 to 323 (YLVKQKLGDG…TAKYCKEVFF (303 aa)). Residues 27 to 35 (LGDGSFGTV) and Lys-53 each bind ATP. The active-site Proton acceptor is the Asp-150.

The protein belongs to the protein kinase superfamily. Ser/Thr protein kinase family.

It catalyses the reaction L-seryl-[protein] + ATP = O-phospho-L-seryl-[protein] + ADP + H(+). It carries out the reaction L-threonyl-[protein] + ATP = O-phospho-L-threonyl-[protein] + ADP + H(+). Protein kinase which is essential for spore formation. In Schizosaccharomyces pombe (strain 972 / ATCC 24843) (Fission yeast), this protein is Sporulation protein kinase mde3 (mde3).